The sequence spans 1408 residues: DNA-directed RNA polymerase subunit beta' (1408 aa).

Positions 70, 72, 85, and 88 each coordinate Zn(2+). Residues Asp458, Asp460, and Asp462 each contribute to the Mg(2+) site. 4 residues coordinate Zn(2+): Cys813, Cys887, Cys894, and Cys897. The interval 1387-1408 (AELEAATATAPADAGGDSPATE) is disordered. The segment covering 1389–1408 (LEAATATAPADAGGDSPATE) has biased composition (low complexity).

Belongs to the RNA polymerase beta' chain family. In terms of assembly, the RNAP catalytic core consists of 2 alpha, 1 beta, 1 beta' and 1 omega subunit. When a sigma factor is associated with the core the holoenzyme is formed, which can initiate transcription. The cofactor is Mg(2+). It depends on Zn(2+) as a cofactor.

The catalysed reaction is RNA(n) + a ribonucleoside 5'-triphosphate = RNA(n+1) + diphosphate. Functionally, DNA-dependent RNA polymerase catalyzes the transcription of DNA into RNA using the four ribonucleoside triphosphates as substrates. The polypeptide is DNA-directed RNA polymerase subunit beta' (Polaromonas sp. (strain JS666 / ATCC BAA-500)).